Here is a 266-residue protein sequence, read N- to C-terminus: 15-hydroxyprostaglandin dehydrogenase [NAD(+)] (266 aa).

Residues 12 to 20 (GAAQGIGKA), 36 to 37 (DW), 63 to 65 (CDV), and asparagine 91 contribute to the NAD(+) site. Residues serine 138 and glutamine 148 each coordinate substrate. Tyrosine 151 acts as the Proton acceptor in catalysis. NAD(+)-binding positions include 151–155 (YCASK) and 186–188 (VKT).

The protein belongs to the short-chain dehydrogenases/reductases (SDR) family. In terms of assembly, homodimer.

The protein resides in the cytoplasm. It catalyses the reaction prostaglandin E2 + NAD(+) = 15-oxoprostaglandin E2 + NADH + H(+). The catalysed reaction is (15S)-hydroxy-(5Z,8Z,11Z,13E)-eicosatetraenoate + NAD(+) = 15-oxo-(5Z,8Z,11Z,13E)-eicosatetraenoate + NADH + H(+). It carries out the reaction (11R)-hydroxy-(5Z,8Z,12E,14Z)-eicosatetraenoate + NAD(+) = 11-oxo-(5Z,8Z,12E,14Z)-eicosatetraenoate + NADH + H(+). The enzyme catalyses lipoxin A4 + NAD(+) = 15-oxo-(5S,6R)-dihydroxy-(7E,9E,11Z,13E)-eicosatetraenoate + NADH + H(+). It catalyses the reaction 15-oxo-(5S,6R)-dihydroxy-(7E,9E,11Z)-eicosatrienoate + NADH + H(+) = (5S,6R,15S)-trihydroxy-(7E,9E,11Z)-eicosatrienoate + NAD(+). The catalysed reaction is prostaglandin A1 + NAD(+) = 15-oxo-prostaglandin A1 + NADH + H(+). It carries out the reaction prostaglandin E1 + NAD(+) = 15-oxoprostaglandin E1 + NADH + H(+). The enzyme catalyses 14-hydroxy-(4Z,7Z,10Z,12E,16Z,19Z)-docosahexaenoate + NAD(+) = 14-oxo-(4Z,7Z,10Z,12E,16Z,19Z)-docosahexaenoate + NADH + H(+). It catalyses the reaction resolvin E1 + NAD(+) = 18-oxo-resolvin E1 + NADH + H(+). The catalysed reaction is resolvin D1 + NAD(+) = 8-oxoresolvin D1 + NADH + H(+). It carries out the reaction resolvin D1 + NAD(+) = 17-oxoresolvin D1 + NADH + H(+). The enzyme catalyses resolvin D2 + NAD(+) = 7-oxoresolvin D2 + NADH + H(+). It catalyses the reaction resolvin D2 + NAD(+) = 16-oxoresolvin D2 + NADH + H(+). Its function is as follows. Catalyzes the NAD-dependent dehydrogenation (oxidation) of a broad array of hydroxylated polyunsaturated fatty acids (mainly eicosanoids and docosanoids, including prostaglandins, lipoxins and resolvins), yielding their corresponding keto (oxo) metabolites. Decreases the levels of the pro-proliferative prostaglandins such as prostaglandin E2 (whose activity is increased in cancer because of an increase in the expression of cyclooxygenase 2) and generates oxo-fatty acid products that can profoundly influence cell function by abrogating pro-inflammatory cytokine expression. Converts resolvins E1, D1 and D2 to their oxo products, which represents a mode of resolvin inactivation. Resolvin E1 plays important roles during the resolution phase of acute inflammation, while resolvins D1 and D2 have a unique role in obesity-induced adipose inflammation. In Rattus norvegicus (Rat), this protein is 15-hydroxyprostaglandin dehydrogenase [NAD(+)] (Hpgd).